The chain runs to 270 residues: Glutamate 5-kinase (270 aa).

Lys18 contributes to the ATP binding site. Ser54, Asp141, and Asn153 together coordinate substrate. 173 to 174 (SD) lines the ATP pocket.

Belongs to the glutamate 5-kinase family.

It is found in the cytoplasm. It carries out the reaction L-glutamate + ATP = L-glutamyl 5-phosphate + ADP. It functions in the pathway amino-acid biosynthesis; L-proline biosynthesis; L-glutamate 5-semialdehyde from L-glutamate: step 1/2. Its function is as follows. Catalyzes the transfer of a phosphate group to glutamate to form L-glutamate 5-phosphate. This chain is Glutamate 5-kinase, found in Leifsonia xyli subsp. xyli (strain CTCB07).